The sequence spans 208 residues: Casparian strip membrane protein 2 (208 aa).

The disordered stretch occupies residues 1 to 23 (MDSKSGRSESAINIPESNSTKHK). The Cytoplasmic segment spans residues 1–46 (MDSKSGRSESAINIPESNSTKHKSTVVHTATKVAAVAPRGGGWRRG). Polar residues predominate over residues 8 to 18 (SESAINIPESN). The helical transmembrane segment at 47–67 (VSIFDFILRICALAAALAATA) threads the bilayer. At 68 to 96 (TMGTTDQTLPFFTQFFQFQASYDDLPAFT) the chain is on the extracellular side. A helical membrane pass occupies residues 97 to 117 (FFVVANGIASGYLVLSLPFSI). Residues 118-129 (ATIVRPHAAAIK) are Cytoplasmic-facing. A helical membrane pass occupies residues 130-150 (LLLIIFDTVMVAFTAAAAAAA). Residues 151 to 184 (AAIVYLAHNGNSKTNWFAICQQFNDFCQRVSGAV) lie on the Extracellular side of the membrane. A helical membrane pass occupies residues 185-205 (VASFVAAVILIFLVVLSAVAI). Over 206-208 (RKH) the chain is Cytoplasmic.

The protein belongs to the Casparian strip membrane proteins (CASP) family. In terms of assembly, homodimer and heterodimers.

It localises to the cell membrane. Functionally, regulates membrane-cell wall junctions and localized cell wall deposition. Required for establishment of the Casparian strip membrane domain (CSD) and the subsequent formation of Casparian strips, a cell wall modification of the root endodermis that determines an apoplastic barrier between the intraorganismal apoplasm and the extraorganismal apoplasm and prevents lateral diffusion. This chain is Casparian strip membrane protein 2, found in Triphysaria pusilla (Dwarf owl's-clover).